We begin with the raw amino-acid sequence, 151 residues long: MYYSIIIACLVLLLCLVIYVGHRADHALKYLEGMWHGDPVFLKQSGLQSFYLYIQPGHTCFFSIVNKNGEKLMETKIPCTITNKIYMFFKPIFEFHVVMAHTYSYFPKQFNFLLDSTEGKLILENNHVIYAVLYKDNFATALGKTVKKYIT.

The signal sequence occupies residues methionine 1–alanine 24.

The protein belongs to the asfivirus EP152R family.

The protein resides in the virion. This is an uncharacterized protein from Ornithodoros (relapsing fever ticks).